A 694-amino-acid polypeptide reads, in one-letter code: Putative L-type lectin-domain containing receptor kinase II.2 (694 aa).

Positions 1 to 24 (MAGVLRSLRFWMIICVQVLSLVLA) are cleaved as a signal peptide. Residues 25–318 (QDRDEFVYHD…PTSRSKDSKN (294 aa)) are Extracellular-facing. The tract at residues 27–272 (RDEFVYHDFS…DQYILGWSFK (246 aa)) is legume-lectin like. N-linked (GlcNAc...) asparagine glycans are attached at residues Asn-57, Asn-58, Asn-73, Asn-131, Asn-172, Asn-183, Asn-201, Asn-208, Asn-240, and Asn-246. The interval 283–314 (SKILDPPNRPPPPSSPPPPPPPPPTPPTSRSK) is disordered. Positions 289–309 (PNRPPPPSSPPPPPPPPPTPP) are enriched in pro residues. A helical membrane pass occupies residues 319 to 339 (IIIICVTVTSIAFLLMLGGFL). Residues 340–694 (YLYKKKKYAE…EDVTILFGGR (355 aa)) lie on the Cytoplasmic side of the membrane. Positions 375–650 (FRENRLLGAG…IQYLEGNATI (276 aa)) constitute a Protein kinase domain. ATP contacts are provided by residues 381–389 (LGAGGFGKV) and Lys-403. The active-site Proton acceptor is Asp-500.

In the C-terminal section; belongs to the protein kinase superfamily. Ser/Thr protein kinase family. It in the N-terminal section; belongs to the leguminous lectin family.

It localises to the cell membrane. The catalysed reaction is L-seryl-[protein] + ATP = O-phospho-L-seryl-[protein] + ADP + H(+). The enzyme catalyses L-threonyl-[protein] + ATP = O-phospho-L-threonyl-[protein] + ADP + H(+). The protein is Putative L-type lectin-domain containing receptor kinase II.2 (LECRK22) of Arabidopsis thaliana (Mouse-ear cress).